Here is a 359-residue protein sequence, read N- to C-terminus: Phosphoserine aminotransferase (359 aa).

Arg-42 is a binding site for L-glutamate. Residues 76–77 (AS), Trp-102, Thr-152, Asp-171, and Gln-194 contribute to the pyridoxal 5'-phosphate site. N6-(pyridoxal phosphate)lysine is present on Lys-195. 236–237 (NT) lines the pyridoxal 5'-phosphate pocket.

Belongs to the class-V pyridoxal-phosphate-dependent aminotransferase family. SerC subfamily. Homodimer. Pyridoxal 5'-phosphate serves as cofactor.

The protein localises to the cytoplasm. The enzyme catalyses O-phospho-L-serine + 2-oxoglutarate = 3-phosphooxypyruvate + L-glutamate. It carries out the reaction 4-(phosphooxy)-L-threonine + 2-oxoglutarate = (R)-3-hydroxy-2-oxo-4-phosphooxybutanoate + L-glutamate. It functions in the pathway amino-acid biosynthesis; L-serine biosynthesis; L-serine from 3-phospho-D-glycerate: step 2/3. Its pathway is cofactor biosynthesis; pyridoxine 5'-phosphate biosynthesis; pyridoxine 5'-phosphate from D-erythrose 4-phosphate: step 3/5. Catalyzes the reversible conversion of 3-phosphohydroxypyruvate to phosphoserine and of 3-hydroxy-2-oxo-4-phosphonooxybutanoate to phosphohydroxythreonine. In Ruthia magnifica subsp. Calyptogena magnifica, this protein is Phosphoserine aminotransferase.